The chain runs to 413 residues: Serine hydroxymethyltransferase (413 aa).

Residues leucine 120 and 124–126 contribute to the (6S)-5,6,7,8-tetrahydrofolate site; that span reads GHL. Lysine 229 carries the N6-(pyridoxal phosphate)lysine modification. 352–354 is a (6S)-5,6,7,8-tetrahydrofolate binding site; the sequence is SPF.

The protein belongs to the SHMT family. In terms of assembly, homodimer. Requires pyridoxal 5'-phosphate as cofactor.

The protein localises to the cytoplasm. The catalysed reaction is (6R)-5,10-methylene-5,6,7,8-tetrahydrofolate + glycine + H2O = (6S)-5,6,7,8-tetrahydrofolate + L-serine. It participates in one-carbon metabolism; tetrahydrofolate interconversion. The protein operates within amino-acid biosynthesis; glycine biosynthesis; glycine from L-serine: step 1/1. Catalyzes the reversible interconversion of serine and glycine with tetrahydrofolate (THF) serving as the one-carbon carrier. This reaction serves as the major source of one-carbon groups required for the biosynthesis of purines, thymidylate, methionine, and other important biomolecules. Also exhibits THF-independent aldolase activity toward beta-hydroxyamino acids, producing glycine and aldehydes, via a retro-aldol mechanism. The protein is Serine hydroxymethyltransferase of Heliobacterium modesticaldum (strain ATCC 51547 / Ice1).